The chain runs to 142 residues: Hemoglobin subunit alpha-1 (142 aa).

Serine 1 is modified (N-acetylserine). The Globin domain occupies 1–142; the sequence is SLSDKDKAAV…VALALAERYR (142 aa). O2 is bound at residue histidine 59. A heme b-binding site is contributed by histidine 88.

The protein belongs to the globin family. As to quaternary structure, hb1 is a heterotetramer of two alpha-2 chains and two beta chains, while Hb2 is a heterotetramer of two alpha-2 chains and two beta chains. As to expression, red blood cells.

Functionally, involved in oxygen transport from gills to the various peripheral tissues. This is Hemoglobin subunit alpha-1 (hba1) from Notothenia angustata (Rockcod).